Here is a 284-residue protein sequence, read N- to C-terminus: Type II methyltransferase M1.LlaDCHI (284 aa).

S-adenosyl-L-methionine-binding residues include Trp17, Lys21, Asp62, and Asp194.

The protein belongs to the N(4)/N(6)-methyltransferase family.

The enzyme catalyses a 2'-deoxyadenosine in DNA + S-adenosyl-L-methionine = an N(6)-methyl-2'-deoxyadenosine in DNA + S-adenosyl-L-homocysteine + H(+). Its function is as follows. An alpha subtype methylase, recognizes the double-stranded sequence 5'-GATC-3', methylates A-2 on both strands, and protects the DNA from cleavage by the LlaDCHI endonuclease. This is Type II methyltransferase M1.LlaDCHI from Lactococcus lactis subsp. cremoris (Streptococcus cremoris).